The chain runs to 159 residues: Large ribosomal subunit protein uL13 (159 aa).

Belongs to the universal ribosomal protein uL13 family. As to quaternary structure, part of the 50S ribosomal subunit.

Its function is as follows. This protein is one of the early assembly proteins of the 50S ribosomal subunit, although it is not seen to bind rRNA by itself. It is important during the early stages of 50S assembly. This is Large ribosomal subunit protein uL13 from Methanopyrus kandleri (strain AV19 / DSM 6324 / JCM 9639 / NBRC 100938).